The following is a 254-amino-acid chain: Chalcone isomerase cfoK (254 aa).

Residues His-33 and Tyr-50 contribute to the active site.

The enzyme catalyses a chalcone = a flavanone.. It functions in the pathway secondary metabolite biosynthesis; flavonoid biosynthesis. Functionally, chalcone isomerase; part of the gene cluster that mediates the biosynthesis of chlorflavonin, a fungal flavonoid with acetolactate synthase inhibitory activity. Within the pathway, cfoK acts as chalcone isomerase (CHI), the key enzyme responsible for the tricyclic formation of flavanone through Michael-type intramolecular cyclization of chalcone. The hydrogen at C2'-OH is extracted by the imidazole ring of His-33, which induces the oxa-Michael addition to form the intermediate enolate through 6-endo-trig mode cyclization. The enolate can then be stabilized by a hydrogen bond with the Tyr-50 residue. Following enol tautomerization, the C ring, a gamma-pyranone ring, is formed. The pathway begins with the PKS-NRPS hybrid synthetase cfoA that uses benzoic acid or p-hydroxybenzoic acid as a starter unit with four rounds of chain elongation using malonyl-CoA to form the chalcone skeleton. Then, a new type of chalcone isomerase, cfoK, catalyzes the conversion of the chalcone into a flavanone by a histidine-mediated oxa-Michael addition mechanism. The desaturation of flavanone to flavone is catalyzed by a new type of flavone synthase, the flavin mononucleotide (FMN)-dependent oxidoreductase cfoJ. Monooxygenases cfoF, cfoG, and P450 cfoH are responsible for the hydroxylation of the flavonoid skeleton at sites C3, C8, and C2', respectively. Like cfoF, the dehydratase cfoI plays also a role in the hydroxylation of position C3. Methyltransferases cfoB, cfoC, and cfoD then catalyze the methylation of C7-OH, C8-OH, and C3-OH, respectively. Finally, the monooxygenase cfoE is responsible for the chlorination of flavonoid at position C3'. The protein is Chalcone isomerase cfoK of Aspergillus candidus.